Reading from the N-terminus, the 754-residue chain is Nibrin (754 aa).

In terms of domain architecture, FHA spans 24 to 83; sequence YVVGRKNCAILIENDQSISRNHAVLTANFSVTNLSQTDEIPVLTLKDNSKYGTFVNEEKM. 2 BRCT domains span residues 105-181 and 224-315; these read KFRI…TEFL and GKTF…LAVI. The tract at residues 111–328 is mediates interaction with SP100; that stretch reads EPLVACSSCL…TKNYCDPQGH (218 aa). The interval 221-402 is interaction with MTOR, MAPKAP1 and RICTOR; it reads IFKGKTFIFL…FRMLSQDAPT (182 aa). Residue serine 278 is modified to Phosphoserine; by ATM. Residues 326–346 form a disordered region; that stretch reads QGHPSTGLKTTTPGPSLSQGV. Residues 328–346 are compositionally biased toward polar residues; sequence HPSTGLKTTTPGPSLSQGV. Threonine 337 bears the Phosphothreonine mark. The residue at position 343 (serine 343) is a Phosphoserine; by ATM. Serine 347 is subject to Phosphoserine. The residue at position 388 (lysine 388) is an N6-lactoyllysine. Disordered regions lie at residues 396–415 and 430–478; these read LSQDAPTVKESCKTSSNNNS and QLSP…MSSC. A Phosphoserine modification is found at serine 397. Threonine 402 carries the post-translational modification Phosphothreonine. Composition is skewed to polar residues over residues 430 to 440 and 447 to 462; these read QLSPTKLPSIN and SQQQQTNSIRNYFQPS. The residue at position 432 (serine 432) is a Phosphoserine; by CDK2. A Glycyl lysine isopeptide (Lys-Gly) (interchain with G-Cter in ubiquitin) cross-link involves residue lysine 435. The Nuclear localization signal motif lies at 461–467; it reads PSTKKRE. Residues serine 509 and serine 518 each carry the phosphoserine modification. Glycyl lysine isopeptide (Lys-Gly) (interchain with G-Cter in SUMO2) cross-links involve residues lysine 529, lysine 571, and lysine 582. Phosphoserine occurs at positions 615 and 673. Glycyl lysine isopeptide (Lys-Gly) (interchain with G-Cter in ubiquitin) cross-links involve residues lysine 686, lysine 690, and lysine 735. Positions 740–749 match the FxF/Y motif motif; the sequence is ADDLFRYNPY.

Belongs to the Nibrin family. In terms of assembly, component of the MRN complex composed of two heterodimers RAD50 and MRE11 associated with a single NBN. The MRN complexes dimerize on DNA to form joined MRN-MRN oligomers required for DNA double-strand break repair. As part of the MRN complex, interacts with MCM9; the interaction recruits the complex to DNA repair sites. Component of the BASC complex, at least composed of BRCA1, MSH2, MSH6, MLH1, ATM, BLM, RAD50, MRE11 and NBN. Interacts with histone H2AX; this requires phosphorylation of H2AX on 'Ser-139' and promotes NBN recruitment to DNA damage sites. Interacts with (phosphorylated) MDC1; promoting NBN recruitment to DNA damage sites. Interacts with (phosphorylated) RAD17; promoting NBN recruitment to DNA damage sites. Interacts (via FxF/Y motif) with ATM. Interacts with HJURP. Interacts with INTS3. Interacts with KPNA2. Interacts with TERF2; interaction is disrupted upon NBN phosphorylation by CDK2. Interacts with (phosphorylated) RBBP8/CtIP; the interaction links the role of the MRN complex in DNA double-strand break sensing to resection. Interacts with SP100; recruits NBN to PML bodies. Interacts with ATF2. Interacts with MTOR, MAPKAP1 isoform 2 and RICTOR; indicative for an association with the mTORC2 complex. Interacts with MRNIP. Interacts with UFL1; promoting UFL1 recruitment to double-strand breaks following DNA damage. Interacts with CYREN (via XLF motif). (Microbial infection) Interacts with herpes simplex virus 1 protein UL12. In terms of processing, phosphorylated by ATM in response of ionizing radiation, and such phosphorylation is responsible intra-S phase checkpoint control and telomere maintenance. Phosphorylated at Ser-432 by CDK2 in S/G2 phases abolishes interaction with TERF2, enabling DCLRE1B/Apollo recruitment to telomeres. Phosphorylation at Ser-432 in response to dysfunctional telomeres promotes non-homologous end joining repair at telomeres, while dephosphorylation by PPP1CA promotes microhomology-mediated end-joining (MMEJ) repair. Ubiquitinated at Lys-435 via 'Lys-6'-linked ubiquitin chains by RNF8, promoting NBN recruitment to DNA double-strand breaks (DSBs). Ubiquitinated at Lys-686 and Lys-689 via 'Lys-63'-linked ubiquitin chains by PELI1: ubiquitination takes place following PELI1 phosphorylation and promotes ATM activation and DNA repair. Ubiquitinated at Lys-735 via 'Lys-63'-linked ubiquitin chains by the SCF(SKP2) complex: ubiquitination takes place following SKP2 phosphorylation and promotes ATM activation and DNA repair. Post-translationally, lactylation at Lys-388 by KAT5 in response to DNA damage promotes recruitment of the MRN complex to DNA damage sites. Delactylated by HDAC3. In terms of tissue distribution, ubiquitous. Expressed at high levels in testis.

It localises to the nucleus. It is found in the chromosome. The protein resides in the PML body. The protein localises to the telomere. In terms of biological role, component of the MRN complex, which plays a central role in double-strand break (DSB) repair, DNA recombination, maintenance of telomere integrity and meiosis. The MRN complex is involved in the repair of DNA double-strand breaks (DSBs) via homologous recombination (HR), an error-free mechanism which primarily occurs during S and G2 phases. The complex (1) mediates the end resection of damaged DNA, which generates proper single-stranded DNA, a key initial steps in HR, and is (2) required for the recruitment of other repair factors and efficient activation of ATM and ATR upon DNA damage. The MRN complex possesses single-strand endonuclease activity and double-strand-specific 3'-5' exonuclease activity, which are provided by MRE11, to initiate end resection, which is required for single-strand invasion and recombination. Within the MRN complex, NBN acts as a protein-protein adapter, which specifically recognizes and binds phosphorylated proteins, promoting their recruitment to DNA damage sites. Recruits MRE11 and RAD50 components of the MRN complex to DSBs in response to DNA damage. Promotes the recruitment of PI3/PI4-kinase family members ATM, ATR, and probably DNA-PKcs to the DNA damage sites, activating their functions. Mediates the recruitment of phosphorylated RBBP8/CtIP to DSBs, leading to cooperation between the MRN complex and RBBP8/CtIP to initiate end resection. RBBP8/CtIP specifically promotes the endonuclease activity of the MRN complex to clear DNA ends containing protein adducts. The MRN complex is also required for the processing of R-loops. NBN also functions in telomere length maintenance via its interaction with TERF2: interaction with TERF2 during G1 phase preventing recruitment of DCLRE1B/Apollo to telomeres. NBN also promotes DNA repair choice at dysfunctional telomeres: NBN phosphorylation by CDK2 promotes non-homologous end joining repair at telomeres, while unphosphorylated NBN promotes microhomology-mediated end-joining (MMEJ) repair. Enhances AKT1 phosphorylation possibly by association with the mTORC2 complex. This Homo sapiens (Human) protein is Nibrin.